The following is a 379-amino-acid chain: Chaperone protein DnaJ (379 aa).

The region spanning 5 to 70 is the J domain; that stretch reads DYYEILGLDK…QKKAQYDQFG (66 aa). The CR-type zinc-finger motif lies at 135 to 217; sequence GVEKEISVTR…CRGKGIVRKH (83 aa). C148, C151, C165, C168, C191, C194, C205, and C208 together coordinate Zn(2+). 4 CXXCXGXG motif repeats span residues 148–155, 165–172, 191–198, and 205–212; these read CETCNGTG, CDKCNGTG, CDKCGGRG, and CEECRGKG.

It belongs to the DnaJ family. In terms of assembly, homodimer. Zn(2+) is required as a cofactor.

It localises to the cytoplasm. In terms of biological role, participates actively in the response to hyperosmotic and heat shock by preventing the aggregation of stress-denatured proteins and by disaggregating proteins, also in an autonomous, DnaK-independent fashion. Unfolded proteins bind initially to DnaJ; upon interaction with the DnaJ-bound protein, DnaK hydrolyzes its bound ATP, resulting in the formation of a stable complex. GrpE releases ADP from DnaK; ATP binding to DnaK triggers the release of the substrate protein, thus completing the reaction cycle. Several rounds of ATP-dependent interactions between DnaJ, DnaK and GrpE are required for fully efficient folding. Also involved, together with DnaK and GrpE, in the DNA replication of plasmids through activation of initiation proteins. In Clostridium kluyveri (strain ATCC 8527 / DSM 555 / NBRC 12016 / NCIMB 10680 / K1), this protein is Chaperone protein DnaJ.